Here is a 752-residue protein sequence, read N- to C-terminus: F-box and WD repeat domain containing protein 10B (752 aa).

6 WD repeats span residues 169–206 (GLNQDITDVCFSPEKDHSSKSATSQVYWTAKTQHTSLP), 451–490 (GHAGSVRALFLCEEENFLLSGSYDLSIRYWDLKSGVCTRI), 493–532 (GHQGTITCMDLCKNRLVSGGRDCQVKVWDVDTGKCLKTFR), 534–569 (KDPILATRINDTYIVSSCERGLVKVWHIAMAQLVKT), 572–609 (GHEGAVKCLFFDQWHLLSGSTDGLVMAWSMVGKYERCL), and 611–652 (AFKH…KVIK).

As to expression, expressed in pancreas, heart and skeletal muscle.

This chain is F-box and WD repeat domain containing protein 10B, found in Homo sapiens (Human).